Consider the following 623-residue polypeptide: tRNA uridine 5-carboxymethylaminomethyl modification enzyme MnmG (623 aa).

Residue 10-15 (GGGHAG) coordinates FAD. 269 to 283 (GPRYCPSIEDKIVRF) contributes to the NAD(+) binding site.

This sequence belongs to the MnmG family. Homodimer. Heterotetramer of two MnmE and two MnmG subunits. FAD serves as cofactor.

It localises to the cytoplasm. Functionally, NAD-binding protein involved in the addition of a carboxymethylaminomethyl (cmnm) group at the wobble position (U34) of certain tRNAs, forming tRNA-cmnm(5)s(2)U34. The chain is tRNA uridine 5-carboxymethylaminomethyl modification enzyme MnmG from Rhizobium meliloti (strain 1021) (Ensifer meliloti).